Reading from the N-terminus, the 137-residue chain is Small ribosomal subunit protein uS12 (137 aa).

3-methylthioaspartic acid is present on D102.

Belongs to the universal ribosomal protein uS12 family. Part of the 30S ribosomal subunit. Contacts proteins S8 and S17. May interact with IF1 in the 30S initiation complex.

Functionally, with S4 and S5 plays an important role in translational accuracy. In terms of biological role, interacts with and stabilizes bases of the 16S rRNA that are involved in tRNA selection in the A site and with the mRNA backbone. Located at the interface of the 30S and 50S subunits, it traverses the body of the 30S subunit contacting proteins on the other side and probably holding the rRNA structure together. The combined cluster of proteins S8, S12 and S17 appears to hold together the shoulder and platform of the 30S subunit. This is Small ribosomal subunit protein uS12 from Mesoplasma florum (strain ATCC 33453 / NBRC 100688 / NCTC 11704 / L1) (Acholeplasma florum).